The sequence spans 3008 residues: Genome polyprotein (3008 aa).

Ser-2 is subject to N-acetylserine; by host. The tract at residues 2-23 (STNPKPQRKTKRNTNRRPMDVK) is interaction with STAT1. The interaction with EIF2AK2/PKR stretch occupies residues 2–58 (STNPKPQRKTKRNTNRRPMDVKFPGGGQIVGGVYLLPRRGPRLGVRATRKTSERSQP). The segment at 2 to 59 (STNPKPQRKTKRNTNRRPMDVKFPGGGQIVGGVYLLPRRGPRLGVRATRKTSERSQPR) is interaction with DDX3X. The segment at 2–75 (STNPKPQRKT…PKARRPEGRS (74 aa)) is disordered. Residues 2 to 168 (STNPKPQRKT…EDGINYATGN (167 aa)) are Cytoplasmic-facing. 2 consecutive short sequence motifs (nuclear localization signal) follow at residues 5 to 13 (PKPQRKTKR) and 38 to 43 (PRRGPR). Residues 7 to 16 (PQRKTKRNTN) are compositionally biased toward basic residues. Over residues 32 to 47 (GGVYLLPRRGPRLGVR) the composition is skewed to low complexity. Ser-53 carries the phosphoserine; by host modification. 2 short sequence motifs (nuclear localization signal) span residues 58-64 (PRGRRQP) and 66-71 (PKARRP). A compositionally biased stretch (basic residues) spans 58–68 (PRGRRQPIPKA). Phosphoserine; by host is present on residues Ser-99 and Ser-116. The tract at residues 112–152 (PRGRSRNLGKVIDTLTCGFADLMGYIPLVGAPVGSVARALA) is important for endoplasmic reticulum and mitochondrial localization. Residues 122-173 (VIDTLTCGFADLMGYIPLVGAPVGSVARALAHGVRALEDGINYATGNLPGCS) are interaction with APOA2. The important for lipid droplets localization stretch occupies residues 164-167 (YATG). The helical transmembrane segment at 169–189 (LPGCSFSIFLLALLSCLTVPA) threads the bilayer. Residues 178–191 (LLALLSCLTVPASA) constitute a propeptide, ER anchor for the core protein, removed in mature form by host signal peptidase. The Lumenal segment spans residues 190–358 (SAVNYRNVSG…SGGHWGVLVG (169 aa)). N-linked (GlcNAc...) asparagine; by host glycans are attached at residues Asn-196, Asn-209, and Asn-234. Positions 265–296 (MVGAATVCSGLYIGDLCGGLFLVGQMFSFRPR) are important for fusion. Asn-305 is a glycosylation site (N-linked (GlcNAc...) asparagine; by host). A helical transmembrane segment spans residues 359 to 379 (VAYFSMQANWAKVILVLFLFA). Residues 380-725 (GVDAETHVSG…WEYVVLAFLL (346 aa)) are Lumenal-facing. The interval 385-412 (THVSGAAVGRSTAGLANLFSSGSKQNLQ) is HVR1. 3 N-linked (GlcNAc...) (high mannose) asparagine; by host glycosylation sites follow: Asn-417, Asn-423, and Asn-430. Disulfide bonds link Cys-429–Cys-553, Cys-452–Cys-459, Cys-487–Cys-495, and Cys-504–Cys-509. An N-linked (GlcNAc...) asparagine; by host glycan is attached at Asn-448. Positions 475–479 (ANISG) are HVR2. The N-linked (GlcNAc...) asparagine; by host glycan is linked to Asn-476. The tract at residues 481 to 494 (SDDRPYCWHYAPRP) is CD81-binding 1. N-linked (GlcNAc...) asparagine; by host glycosylation is present at Asn-533. Residues 545–552 (PPHGAWFG) form a CD81-binding 2 region. Asn-557 carries N-linked (GlcNAc...) asparagine; by host glycosylation. 4 disulfide bridges follow: Cys-565/Cys-570, Cys-581/Cys-585, Cys-597/Cys-620, and Cys-607/Cys-644. 2 N-linked (GlcNAc...) (high mannose) asparagine; by host glycosylation sites follow: Asn-623 and Asn-645. The cysteines at positions 652 and 677 are disulfide-linked. The PKR/eIF2-alpha phosphorylation homology domain (PePHD) stretch occupies residues 660–671 (VELSPLLLTTTA). Residues 726–746 (LADARVSAYLWMMFMVSQVEA) traverse the membrane as a helical segment. Topologically, residues 747–757 (ALSNLININAA) are lumenal. Residues 758–778 (SAAGAQGFWYAILFICIVWHV) form a helical membrane-spanning segment. Residues 779–782 (KGRF) lie on the Cytoplasmic side of the membrane. A helical transmembrane segment spans residues 783–803 (PAAAAYAACGLWPCFLLLLML). At 804-813 (PERAYAYDQE) the chain is on the lumenal side. The chain crosses the membrane as a helical span at residues 814–834 (VAGSLGGAIVVMLTILTLSPH). Topologically, residues 835–881 (YKLWLARGLWWIQYFIARTEAVLHVYIPSFNVRGPRDSVIVLAVLVC) are cytoplasmic. Residues 882 to 902 (PDLVFDITKYLLAILGPLHIL) traverse the membrane as a helical segment. Over 903 to 928 (QASLLRIPYFVRAQALVKICSLLRGV) the chain is Lumenal. In terms of domain architecture, Peptidase C18 spans 903 to 1026 (QASLLRIPYF…TETSKGWRLL (124 aa)). The interval 904-1206 (ASLLRIPYFV…PVESLETTMR (303 aa)) is protease NS2-3. Cys-922 carries the S-palmitoyl cysteine; by host lipid modification. The chain crosses the membrane as a helical span at residues 929-949 (VYGKYFQMVVLKSRGLTGTYI). The interaction with host SCPS1 stretch occupies residues 929-949 (VYGKYFQMVVLKSRGLTGTYI). The Cytoplasmic portion of the chain corresponds to 950–1657 (YDHLTPMSDW…CMSADLEVVT (708 aa)). Residues His-952, Glu-972, and Cys-993 each act as for protease NS2 activity; shared with dimeric partner in the active site. In terms of domain architecture, Peptidase S29 spans 1027-1208 (APITAYAQQT…ESLETTMRSP (182 aa)). Residues His-1083 and Asp-1107 each act as charge relay system; for serine protease NS3 activity in the active site. 2 residues coordinate Zn(2+): Cys-1123 and Cys-1125. Ser-1165 serves as the catalytic Charge relay system; for serine protease NS3 activity. Residues Cys-1171 and His-1175 each coordinate Zn(2+). A Helicase ATP-binding domain is found at 1217–1369 (PAVPQTYQVA…SNIEEVALPT (153 aa)). ATP is bound at residue 1230–1237 (APTGSGKS). Residues Ser-1237 and Glu-1317 each coordinate Mg(2+). The DECH box signature appears at 1316 to 1319 (DECY). The segment at 1486–1498 (QRRGRTGRGRLGT) is RNA-binding. The helical transmembrane segment at 1658–1678 (STWVLVGGVLAALAAYCLSVG) threads the bilayer. Residues 1679 to 1690 (SVVIVGRVVLSG) form an NS3-binding region. Over 1679-1805 (SVVIVGRVVL…AVTSPLTTQQ (127 aa)) the chain is Cytoplasmic. Residues 1806–1826 (TLLFNILGGWVASQIRDSDAS) traverse the membrane as a helical segment. The Lumenal portion of the chain corresponds to 1827–1828 (TA). Residues 1829–1849 (FVVSGLAGAAVGSVGLGKILV) traverse the membrane as a helical segment. A topological domain (cytoplasmic) is located at residue Asp-1850. A helical transmembrane segment spans residues 1851–1871 (ILPGYGAGVRGAVVTFKIMSG). Residues 1872–1881 (EMPSTEDLVN) lie on the Lumenal side of the membrane. The helical transmembrane segment at 1882–1902 (LLPAILSPGALVVEVVCPAIL) threads the bilayer. At 1903–1972 (RRHVGPGEGA…WINEDCSTPC (70 aa)) the chain is on the cytoplasmic side. A lipid anchor (S-palmitoyl cysteine; by host) is attached at Cys-1972. The stretch at 1973–2002 (AESWLWEVWDWVLHVLSDFKTCLKAKFVPL) is an intramembrane region. At 2003–2987 (MPGIPLLSWP…YHSMSHARPR (985 aa)) the chain is on the cytoplasmic side. Positions 2029, 2031, and 2052 each coordinate Zn(2+). The segment at 2120–2208 (ELFTEVDGIR…ASSSASQLSP (89 aa)) is FKBP8-binding. Positions 2120 to 2329 (ELFTEVDGIR…PVPSPRRKRT (210 aa)) are transcriptional activation. The segment at 2135–2139 (PKCKP) is interaction with non-structural protein 4A. An interaction with host SKP2 region spans residues 2189 to 2435 (RLARGSRPSL…ALVTPCAAEE (247 aa)). Ser-2194, Ser-2197, Ser-2201, Ser-2204, and Ser-2207 each carry phosphoserine; by host. Residues 2210–2245 (LLQATCTAPHDSPGTDLLEANLLWGSTATRVETDEK) are ISDR. Residues 2210–2272 (LLQATCTAPH…REVSVAAEIL (63 aa)) form an interaction with EIF2AK2/PKR region. Positions 2245-2303 (KVIILDSFESCVAEQNDDREVSVAAEILRPTKKFPPALPIWARPDYNPPLTETWKQQDY) are NS4B-binding. The V3 stretch occupies residues 2296-2373 (ETWKQQDYQA…TPTETTDSGP (78 aa)). Residues 2319–2322 (PPVP) carry the SH3-binding motif. A Nuclear localization signal motif is present at residues 2324 to 2332 (PRRKRTVQL). Residues 2346–2406 (AKTFGQSEPS…DPDLTSDSWS (61 aa)) form a disordered region. Lys-2347 is covalently cross-linked (Glycyl lysine isopeptide (Lys-Gly) (interchain with G-Cter in ubiquitin)). Ser-2446 carries the post-translational modification Phosphoserine; by host. The RdRp catalytic domain occupies 2631–2749 (PMGFSYDTRC…IAESDGVEED (119 aa)). Residues Asp-2637, Asp-2735, and Asp-2736 each contribute to the Mg(2+) site. The helical transmembrane segment at 2988–3008 (YLLLCLLILTVGVGIFLLPAR) threads the bilayer.

This sequence belongs to the hepacivirus polyprotein family. As to quaternary structure, homooligomer. Interacts with E1 (via C-terminus). Interacts with the non-structural protein 5A. Interacts (via N-terminus) with host STAT1 (via SH2 domain); this interaction results in decreased STAT1 phosphorylation and ubiquitin-mediated proteasome-dependent STAT1 degradation, leading to decreased IFN-stimulated gene transcription. Interacts with host STAT3; this interaction constitutively activates STAT3. Interacts with host LTBR receptor. Interacts with host TNFRSF1A receptor and possibly induces apoptosis. Interacts with host HNRPK. Interacts with host YWHAE. Interacts with host UBE3A/E6AP. Interacts with host DDX3X. Interacts with host APOA2. Interacts with host RXRA protein. Interacts with host SP110 isoform 3/Sp110b; this interaction sequesters the transcriptional corepressor SP110 away from the nucleus. Interacts with host CREB3 nuclear transcription protein; this interaction triggers cell transformation. Interacts with host ACY3. Interacts with host C1QR1. Interacts with host RBM24; this interaction, which enhances the interaction of the mature core protein with 5'-UTR, may inhibit viral translation and favor replication. Interacts with host EIF2AK2/PKR; this interaction induces the autophosphorylation of EIF2AK2. Part of the viral assembly initiation complex composed of NS2, E1, E2, NS3, NS4A, NS5A and the mature core protein. In terms of assembly, forms a heterodimer with envelope glycoprotein E2. Interacts with mature core protein. Interacts with protease NS2. The heterodimer E1/E2 interacts with host CLDN1; this interaction plays a role in viral entry into host cell. Interacts with host SPSB2 (via C-terminus). Part of the viral assembly initiation complex composed of NS2, E1, E2, NS3, NS4A, NS5A and the mature core protein. Interacts with host NEURL3; this interaction prevents E1 binding to glycoprotein E2. Forms a heterodimer with envelope glycoprotein E1. Interacts with host CD81 and SCARB1 receptors; these interactions play a role in viral entry into host cell. Interacts with host EIF2AK2/PKR; this interaction inhibits EIF2AK2 and probably allows the virus to evade the innate immune response. Interacts with host CD209/DC-SIGN and CLEC4M/DC-SIGNR. Interact with host SPCS1; this interaction is essential for viral particle assembly. Interacts with protease NS2. The heterodimer E1/E2 interacts with host CLDN1; this interaction plays a role in viral entry into host cell. Part of the viral assembly initiation complex composed of NS2, E1, E2, NS3, NS4A, NS5A and the mature core protein. Interacts with host SLC3A2/4F2hc; the interaction may facilitate viral entry into host cell. Interacts with human PLSCR1. As to quaternary structure, homohexamer. Homoheptamer. Interacts with protease NS2. In terms of assembly, homodimer. Interacts with host SPCS1; this interaction is essential for viral particle assembly. Interacts with envelope glycoprotein E1. Interacts with envelope glycoprotein E2. Interacts with viroporin p7. Interacts with serine protease/helicase NS3. Part of the replication complex composed of NS2, NS3, NS4A, NS4B, NS5A and the RNA-directed RNA polymerase embedded in an ER-derived membranous web. Part of the viral assembly initiation complex composed of NS2, E1, E2, NS3, NS4A, NS5A and the mature core protein. Interacts with protease NS2. Interacts with non-structural protein 4A; this interaction stabilizes the folding of NS3 serine protease. NS3-NS4A interaction is essential for NS3 activation and allows membrane anchorage of the latter. NS3/NS4A complex also prevents phosphorylation of host IRF3, thus preventing the establishment of dsRNA induced antiviral state. Interacts with host MAVS; this interaction leads to the cleavage and inhibition of host MAVS. Interacts with host TICAM1; this interaction leads to the cleavage and inhibition of host TICAM1. Interacts with host TANK-binding kinase/TBK1; this interaction results in the inhibition of the association between TBK1 and IRF3, which leads to the inhibition of IRF3 activation. Interacts with host RBM24. Part of the replication complex composed of NS2, NS3, NS4A, NS4B, NS5A and the RNA-directed RNA polymerase embedded in an ER-derived membranous web. Part of the viral assembly initiation complex composed of NS2, E1, E2, NS3, NS4A, NS5A and the mature core protein. As to quaternary structure, interacts with NS3 serine protease; this interaction stabilizes the folding of NS3 serine protease. NS3-NS4A interaction is essential for NS3 activation and allows membrane anchorage of the latter. Interacts with non-structural protein 5A (via N-terminus). Part of the replication complex composed of NS2, NS3, NS4A, NS4B, NS5A and the RNA-directed RNA polymerase embedded in an ER-derived membranous web. Part of the viral assembly initiation complex composed of NS2, E1, E2, NS3, NS4A, NS5A and the mature core protein. In terms of assembly, homomultimer. Interacts with non-structural protein NS5A. Interacts with host PLA2G4C; this interaction likely initiates the recruitment of replication complexes to lipid droplets. Interacts with host STING; this interaction disrupts the interaction between STING and TBK1 thereby suppressing the interferon signaling. Part of the replication complex composed of NS2, NS3, NS4A, NS4B, NS5A and the RNA-directed RNA polymerase embedded in an ER-derived membranous web. Monomer. Homodimer; dimerization is required for RNA-binding. Interacts with the mature core protein. Interacts (via N-terminus) with non-structural protein 4A. Interacts with non-structural protein 4B. Interacts (via region D2) with RNA-directed RNA polymerase. Part of the viral assembly initiation complex composed of NS2, E1, E2, NS3, NS4A, NS5A and the mature core protein. Part of the replication complex composed of NS2, NS3, NS4A, NS4B, NS5A and the RNA-directed RNA polymerase embedded in an ER-derived membranous web. Interacts with host GRB2. Interacts with host BIN1. Interacts with host PIK3R1. Interacts with host SRCAP. Interacts with host FKBP8. Interacts (via C-terminus) with host VAPB (via MSP domain). Interacts with host EIF2AK2/PKR; this interaction leads to disruption of EIF2AK2 dimerization by NS5A and probably allows the virus to evade the innate immune response. Interacts (via N-terminus) with host PACSIN2 (via N-terminus); this interaction attenuates protein kinase C alpha-mediated phosphorylation of PACSIN2 by disrupting the interaction between PACSIN2 and PRKCA. Interacts (via N-terminus) with host SRC kinase (via SH2 domain). Interacts with most Src-family kinases. Interacts with host IFI27 and SKP2; promotes the ubiquitin-mediated proteasomal degradation of NS5A. Interacts with host GPS2. Interacts with host TNFRSF21; this interaction allows the modulation by the virus of JNK, p38 MAPK, STAT3, and Akt signaling pathways in a DR6-dependent manner. Interacts (via N-terminus) with host CIDEB (via N-terminus); this interaction seems to regulate the association of HCV particles with APOE. Interacts with host CHKA/Choline Kinase-alpha; CHKA bridges host PI4KA and NS5A and potentiates NS5A-stimulated PI4KA activity, which then facilitates the targeting of the ternary complex to the ER for viral replication. Interacts with host SPSB2 (via C-terminus); this interaction targets NS5A for ubiquitination and degradation. Interacts with host RAB18; this interaction may promote the association of NS5A and other replicase components with lipid droplets. Interacts (via region D2) with host PPIA/CYPA; the interaction stimulates RNA-binding ability of NS5A and is dependent on the peptidyl-prolyl cis-trans isomerase activity of PPIA/CYPA. Interacts with host TRIM14; this interaction induces the degradation of NS5A. As to quaternary structure, homooligomer. Interacts with non-structural protein 5A. Interacts with host VAPB. Interacts with host PRK2/PKN2. Interacts with host HNRNPA1 and SEPT6; these interactions facilitate viral replication. Part of the replication complex composed of NS2, NS3, NS4A, NS4B, NS5A and the RNA-directed RNA polymerase. Zn(2+) is required as a cofactor. The cofactor is Mg(2+). In terms of processing, specific enzymatic cleavages in vivo yield mature proteins. The structural proteins, core, E1, E2 and p7 are produced by proteolytic processing by host signal peptidases. The core protein precursor is synthesized as a 23 kDa, which is retained in the ER membrane through the hydrophobic signal peptide. Cleavage by the signal peptidase releases the 21 kDa mature core protein. The cleavage of the core protein precursor occurs between aminoacids 176 and 188 but the exact cleavage site is not known. Some degraded forms of the core protein appear as well during the course of infection. The other proteins (p7, NS2, NS3, NS4A, NS4B, NS5A and NS5B) are cleaved by the viral proteases. Autoprocessing between NS2 and NS3 is mediated by the NS2 cysteine protease catalytic domain and regulated by the NS3 N-terminal domain. Post-translationally, phosphorylated by host PKC and PKA. Ubiquitinated; mediated by UBE3A and leading to core protein subsequent proteasomal degradation. In terms of processing, highly N-glycosylated. Post-translationally, palmitoylation is required for NS2/3 autoprocessing and E2 recruitment to membranes. Palmitoylated. This modification may play a role in its polymerization or in protein-protein interactions. In terms of processing, phosphorylated on serines in a basal form termed p56. p58 is a hyperphosphorylated form of p56. p56 and p58 coexist in the cell in roughly equivalent amounts. Hyperphosphorylation is dependent on the presence of NS4A. Host CSNK1A1/CKI-alpha or RPS6KB1 kinases may be responsible for NS5A phosphorylation. Post-translationally, tyrosine phosphorylation is essential for the interaction with host SRC. The N-terminus is phosphorylated by host PRK2/PKN2.

Its subcellular location is the host endoplasmic reticulum membrane. It localises to the host mitochondrion membrane. It is found in the virion. The protein resides in the host cytoplasm. The protein localises to the host nucleus. Its subcellular location is the host lipid droplet. It localises to the virion membrane. It is found in the host mitochondrion. The protein resides in the host cell membrane. The protein localises to the host perinuclear region. It carries out the reaction Hydrolysis of four peptide bonds in the viral precursor polyprotein, commonly with Asp or Glu in the P6 position, Cys or Thr in P1 and Ser or Ala in P1'.. The catalysed reaction is a ribonucleoside 5'-triphosphate + H2O = a ribonucleoside 5'-diphosphate + phosphate + H(+). The enzyme catalyses ATP + H2O = ADP + phosphate + H(+). It catalyses the reaction RNA(n) + a ribonucleoside 5'-triphosphate = RNA(n+1) + diphosphate. Its activity is regulated as follows. Inhibited by the antiviral drug hexamethylene amiloride. Inhibition by amantadine appears to be genotype-dependent. Also inhibited by long-alkyl-chain iminosugar derivatives. With respect to regulation, activity is up-regulated by PRK2/PKN2-mediated phosphorylation. In terms of biological role, packages viral RNA to form a viral nucleocapsid, and promotes virion budding. Participates in the viral particle production as a result of its interaction with the non-structural protein 5A. Binds RNA and may function as a RNA chaperone to induce the RNA structural rearrangements taking place during virus replication. Modulates viral translation initiation by interacting with viral IRES and 40S ribosomal subunit. Affects various cell signaling pathways, host immunity and lipid metabolism. Prevents the establishment of cellular antiviral state by blocking the interferon-alpha/beta (IFN-alpha/beta) and IFN-gamma signaling pathways and by blocking the formation of phosphorylated STAT1 and promoting ubiquitin-mediated proteasome-dependent degradation of STAT1. Activates STAT3 leading to cellular transformation. Regulates the activity of cellular genes, including c-myc and c-fos. May repress the promoter of p53, and sequester CREB3 and SP110 isoform 3/Sp110b in the cytoplasm. Represses cell cycle negative regulating factor CDKN1A, thereby interrupting an important check point of normal cell cycle regulation. Targets transcription factors involved in the regulation of inflammatory responses and in the immune response: suppresses TNF-induced NF-kappa-B activation, and activates AP-1. Binds to dendritic cells (DCs) via C1QR1, resulting in down-regulation of T-lymphocytes proliferation. Alters lipid metabolism by interacting with hepatocellular proteins involved in lipid accumulation and storage. Induces up-regulation of FAS promoter activity, and thereby contributes to the increased triglyceride accumulation in hepatocytes (steatosis). Functionally, forms a heterodimer with envelope glycoprotein E2, which mediates virus attachment to the host cell, virion internalization through clathrin-dependent endocytosis and fusion with host membrane. Fusion with the host cell is most likely mediated by both E1 and E2, through conformational rearrangements of the heterodimer required for fusion rather than a classical class II fusion mechanism. E1/E2 heterodimer binds host apolipoproteins such as APOB and ApoE thereby forming a lipo-viro-particle (LVP). APOE associated to the LVP allows the initial virus attachment to cell surface receptors such as the heparan sulfate proteoglycans (HSPGs), syndecan-1 (SDC1), syndecan-1 (SDC2), the low-density lipoprotein receptor (LDLR) and scavenger receptor class B type I (SCARB1). The cholesterol transfer activity of SCARB1 allows E2 exposure and binding of E2 to SCARB1 and the tetraspanin CD81. E1/E2 heterodimer binding on CD81 activates the epithelial growth factor receptor (EGFR) signaling pathway. Diffusion of the complex E1-E2-EGFR-SCARB1-CD81 to the cell lateral membrane allows further interaction with Claudin 1 (CLDN1) and occludin (OCLN) to finally trigger HCV entry. Forms a heterodimer with envelope glycoprotein E1, which mediates virus attachment to the host cell, virion internalization through clathrin-dependent endocytosis and fusion with host membrane. Fusion with the host cell is most likely mediated by both E1 and E2, through conformational rearrangements of the heterodimer required for fusion rather than a classical class II fusion mechanism. The interaction between envelope glycoprotein E2 and host apolipoprotein E/APOE allows the proper assembly, maturation and infectivity of the viral particles. This interaction is probably promoted via the up-regulation of cellular autophagy by the virus. E1/E2 heterodimer binds host apolipoproteins such as APOB and APOE thereby forming a lipo-viro-particle (LVP). APOE associated to the LVP allows the initial virus attachment to cell surface receptors such as the heparan sulfate proteoglycans (HSPGs), syndecan-1 (SDC1), syndecan-1 (SDC2), the low-density lipoprotein receptor (LDLR) and scavenger receptor class B type I (SCARB1). The cholesterol transfer activity of SCARB1 allows E2 exposure and binding of E2 to SCARB1 and the tetraspanin CD81. E1/E2 heterodimer binding on CD81 activates the epithelial growth factor receptor (EGFR) signaling pathway. Diffusion of the complex E1-E2-EGFR-SCARB1-CD81 to the cell lateral membrane allows further interaction with Claudin 1 (CLDN1) and occludin (OCLN) to finally trigger HCV entry. Inhibits host EIF2AK2/PKR activation, preventing the establishment of an antiviral state. Viral ligand for CD209/DC-SIGN and CLEC4M/DC-SIGNR, which are respectively found on dendritic cells (DCs), and on liver sinusoidal endothelial cells and macrophage-like cells of lymph node sinuses. These interactions allow the capture of circulating HCV particles by these cells and subsequent facilitated transmission to permissive cells such as hepatocytes and lymphocyte subpopulations. The interaction between E2 and host amino acid transporter complex formed by SLC3A2 and SLC7A5/LAT1 may facilitate viral entry into host cell. Its function is as follows. Ion channel protein that acts as a viroporin and plays an essential role in the assembly, envelopment and secretion of viral particles. Regulates the host cell secretory pathway, which induces the intracellular retention of viral glycoproteins and favors assembly of viral particles. Creates a pore in acidic organelles and releases Ca(2+) and H(+) in the cytoplasm of infected cells, leading to a productive viral infection. High levels of cytoplasmic Ca(2+) may trigger membrane trafficking and transport of viral ER-associated proteins to viroplasms, sites of viral genome replication. This ionic imbalance induces the assembly of the inflammasome complex, which triggers the maturation of pro-IL-1beta into IL-1beta through the action of caspase-1. Targets also host mitochondria and induces mitochondrial depolarization. In addition of its role as a viroporin, acts as a lipid raft adhesion factor. In terms of biological role, cysteine protease required for the proteolytic auto-cleavage between the non-structural proteins NS2 and NS3. The N-terminus of NS3 is required for the function of NS2 protease (active region NS2-3). Promotes the initiation of viral particle assembly by mediating the interaction between structural and non-structural proteins. Functionally, displays three enzymatic activities: serine protease with a chymotrypsin-like fold, NTPase and RNA helicase. NS3 serine protease, in association with NS4A, is responsible for the cleavages of NS3-NS4A, NS4A-NS4B, NS4B-NS5A and NS5A-NS5B. The NS3/NS4A complex prevents phosphorylation of host IRF3, thus preventing the establishment of dsRNA induced antiviral state. The NS3/NS4A complex induces host amino acid transporter component SLC3A2, thus contributing to HCV propagation. NS3 RNA helicase binds to RNA and unwinds both dsDNA and dsRNA in the 3' to 5' direction, and likely resolves RNA complicated stable secondary structures in the template strand. Binds a single ATP and catalyzes the unzipping of a single base pair of dsRNA. Inhibits host antiviral proteins TBK1 and IRF3 thereby preventing the establishment of an antiviral state. Cleaves host MAVS/CARDIF thereby preventing the establishment of an antiviral state. Cleaves host TICAM1/TRIF, thereby disrupting TLR3 signaling and preventing the establishment of an antiviral state. Induces a specific membrane alteration that serves as a scaffold for the virus replication complex. This membrane alteration gives rise to the so-called ER-derived membranous web that contains the replication complex. NS4B self-interaction contributes to its function in membranous web formation. Promotes host TRIF protein degradation in a CASP8-dependent manner thereby inhibiting host TLR3-mediated interferon signaling. Disrupts the interaction between STING and TBK1 contributing to the inhibition of interferon signaling. Its function is as follows. Phosphorylated protein that is indispensable for viral replication and assembly. Both hypo- and hyperphosphorylated states are required for the viral life cycle. The hyperphosphorylated form of NS5A is an inhibitor of viral replication. Involved in RNA-binding and especially in binding to the viral genome. Zinc is essential for RNA-binding. Participates in the viral particle production as a result of its interaction with the mature viral core protein. Its interaction with host VAPB may target the viral replication complex to vesicles. Down-regulates viral IRES translation initiation. Mediates interferon resistance, presumably by interacting with and inhibiting host EIF2AK2/PKR. Prevents BIN1-induced apoptosis. Acts as a transcriptional activator of some host genes important for viral replication when localized in the nucleus. Via the interaction with host PACSIN2, modulates lipid droplet formation in order to promote virion assembly. Modulates TNFRSF21/DR6 signaling pathway for viral propagation. In terms of biological role, RNA-dependent RNA polymerase that performs primer-template recognition and RNA synthesis during viral replication. Initiates RNA transcription/replication at a flavin adenine dinucleotide (FAD), resulting in a 5'- FAD cap on viral RNAs. In this way, recognition of viral 5' RNA by host pattern recognition receptors can be bypassed, thereby evading activation of antiviral pathways. This chain is Genome polyprotein, found in Homo sapiens (Human).